The chain runs to 145 residues: 3-hydroxyacyl-[acyl-carrier-protein] dehydratase FabZ (145 aa).

Residue His51 is part of the active site.

Belongs to the thioester dehydratase family. FabZ subfamily.

It localises to the cytoplasm. The enzyme catalyses a (3R)-hydroxyacyl-[ACP] = a (2E)-enoyl-[ACP] + H2O. Functionally, involved in unsaturated fatty acids biosynthesis. Catalyzes the dehydration of short chain beta-hydroxyacyl-ACPs and long chain saturated and unsaturated beta-hydroxyacyl-ACPs. The sequence is that of 3-hydroxyacyl-[acyl-carrier-protein] dehydratase FabZ from Macrococcus caseolyticus (strain JCSC5402) (Macrococcoides caseolyticum).